Consider the following 331-residue polypeptide: Thiamine thiazole synthase (331 aa).

Substrate-binding positions include cysteine 86, glutamate 107–alanine 108, glycine 115, and valine 183. Cysteine 220 is subject to 2,3-didehydroalanine (Cys). Substrate-binding positions include aspartate 222, histidine 237, methionine 289, and arginine 299 to glycine 301.

The protein belongs to the THI4 family. In terms of assembly, homooctamer. Requires Fe cation as cofactor. Post-translationally, during the catalytic reaction, a sulfide is transferred from Cys-220 to a reaction intermediate, generating a dehydroalanine residue.

It localises to the cytoplasm. It is found in the nucleus. The enzyme catalyses [ADP-thiazole synthase]-L-cysteine + glycine + NAD(+) = [ADP-thiazole synthase]-dehydroalanine + ADP-5-ethyl-4-methylthiazole-2-carboxylate + nicotinamide + 3 H2O + 2 H(+). Its function is as follows. Involved in biosynthesis of the thiamine precursor thiazole. Catalyzes the conversion of NAD and glycine to adenosine diphosphate 5-(2-hydroxyethyl)-4-methylthiazole-2-carboxylic acid (ADT), an adenylated thiazole intermediate. The reaction includes an iron-dependent sulfide transfer from a conserved cysteine residue of the protein to a thiazole intermediate. The enzyme can only undergo a single turnover, which suggests it is a suicide enzyme. May have additional roles in adaptation to various stress conditions and in DNA damage tolerance. This chain is Thiamine thiazole synthase, found in Emericella nidulans (strain FGSC A4 / ATCC 38163 / CBS 112.46 / NRRL 194 / M139) (Aspergillus nidulans).